A 42-amino-acid chain; its full sequence is Photosystem I reaction center subunit IX (42 aa).

The chain crosses the membrane as a helical span at residues 7-27 (FLSTAPVLIMALLTVTAGILI).

This sequence belongs to the PsaJ family.

Its subcellular location is the cellular thylakoid membrane. Its function is as follows. May help in the organization of the PsaE and PsaF subunits. The chain is Photosystem I reaction center subunit IX from Crocosphaera subtropica (strain ATCC 51142 / BH68) (Cyanothece sp. (strain ATCC 51142)).